The following is a 1004-amino-acid chain: Protein phosphatase 1 regulatory subunit 12A (1004 aa).

The segment at 35–38 is important for interaction with PPP1CB; that stretch reads KVKF. ANK repeat units lie at residues 39–68, 72–101, 105–134, 138–164, 198–227, and 231–260; these read DDGA…DINY, DGLT…NINQ, EGWI…HVGA, EGDT…RQGV, SGGT…DVNI, and DGWT…DMEA. Residues 291 to 300 are compositionally biased toward basic and acidic residues; the sequence is HSEKREKKSP. A disordered region spans residues 291–920; it reads HSEKREKKSP…SYLEDRKPYC (630 aa). Residues 302–316 show a composition bias toward polar residues; it reads IESTANLDNNQTQKT. 2 stretches are compositionally biased toward basic and acidic residues: residues 318–329 and 336–353; these read KNKETLIMEQEK and SLEH…KDES. The segment covering 357–369 has biased composition (acidic residues); the sequence is SEEEEDDDSESEA. The segment covering 378–392 has biased composition (polar residues); that stretch reads ANANTTSTQSASMTA. Residues 417-427 show a composition bias toward basic and acidic residues; sequence SPKEEERKDES. Residues 464–475 are compositionally biased toward low complexity; it reads RSASSPRLSSSL. The span at 476–486 shows a compositional bias: basic and acidic residues; sequence DNKEKEKDGKG. Residues 514-525 show a composition bias toward low complexity; it reads SSASSIRSGSSY. Residues 528–538 are compositionally biased toward basic and acidic residues; that stretch reads RKWEEDVKKNS. A compositionally biased stretch (polar residues) spans 539–554; the sequence is LNEGPTSLNTSYQRSG. 2 stretches are compositionally biased toward low complexity: residues 564 to 578 and 587 to 602; these read VSSN…VTSS and ASAN…STSA. Residues 613–624 show a composition bias toward basic and acidic residues; sequence WAEDSTEKEKDS. Positions 625 to 659 are enriched in low complexity; that stretch reads VPTAVTVPVAPSVVNAAATTTAMTTATSGTVSSTS. The segment covering 672-681 has biased composition (basic and acidic residues); it reads VRDEESESQR. Residues 682–692 show a composition bias toward basic residues; that stretch reads KARSRQARQSR. The residue at position 695 (T695) is a Phosphothreonine; by ROCK2. The segment covering 717–765 has biased composition (basic and acidic residues); that stretch reads RTREQENEEKEKEEKEKQDKEKQEEKKESETKDDDYRQRYSRTVEEPYH. Residues 770-793 are compositionally biased toward low complexity; sequence TSTSTSTSSTSSLSTSTSSLSSSS. Over residues 794–808 the composition is skewed to polar residues; sequence QLNRPNSLIGITSAY. Basic and acidic residues predominate over residues 812-837; that stretch reads GTKESEREGGKKEEEKEEDKSQPKSI. The segment covering 838 to 849 has biased composition (basic residues); that stretch reads RERRRPREKRRS. A Phosphothreonine; by ROCK2 modification is found at T850. Positions 864–880 are enriched in basic and acidic residues; it reads QEHQSDSEEGTNKKETQ. The segment covering 881-896 has biased composition (polar residues); that stretch reads SDSLSRYDTGSLSVSS.

PP1 comprises a catalytic subunit, PPP1CA, PPP1CB or PPP1CC, and one or several targeting or regulatory subunits. PPP1R12A mediates binding to myosin. Post-translationally, phosphorylated by CIT (Rho-associated kinase) and by ROCK2 on serine and threonine residues. Phosphorylation at Thr-695 leads to inhibition of myosin phosphatase activity. Phosphorylation at Thr-850 abolishes myosin binding. May be phosphorylated at Thr-695 by DMPK; may inhibit the myosin phosphatase activity. As to expression, detected in brain, lung, aorta, heart, gizzard, stomach, oviduct, spleen, kidney and small intestine.

It is found in the cytoplasm. The protein localises to the cytoskeleton. Its subcellular location is the stress fiber. Functionally, regulates myosin phosphatase activity. This is Protein phosphatase 1 regulatory subunit 12A (PPP1R12A) from Gallus gallus (Chicken).